Reading from the N-terminus, the 102-residue chain is Small ribosomal subunit protein uS10 (102 aa).

This sequence belongs to the universal ribosomal protein uS10 family. In terms of assembly, part of the 30S ribosomal subunit.

Functionally, involved in the binding of tRNA to the ribosomes. This chain is Small ribosomal subunit protein uS10, found in Pseudothermotoga lettingae (strain ATCC BAA-301 / DSM 14385 / NBRC 107922 / TMO) (Thermotoga lettingae).